The primary structure comprises 133 residues: Putative pre-16S rRNA nuclease (133 aa).

Belongs to the YqgF nuclease family.

The protein localises to the cytoplasm. Functionally, could be a nuclease involved in processing of the 5'-end of pre-16S rRNA. The protein is Putative pre-16S rRNA nuclease of Bordetella bronchiseptica (strain ATCC BAA-588 / NCTC 13252 / RB50) (Alcaligenes bronchisepticus).